The chain runs to 696 residues: Glutamate-rich protein 6B (696 aa).

Residues 1–10 (MSAENNQLSG) are compositionally biased toward polar residues. Positions 1-105 (MSAENNQLSG…EYLEKAGYLE (105 aa)) are disordered. Composition is skewed to acidic residues over residues 32–44 (EDTE…ESLQ) and 54–72 (ESLE…EEEE). Residues 73–91 (YLGKEEYLKEEEYLGKEEH) are compositionally biased toward basic and acidic residues.

The protein belongs to the ERICH6 family.

The protein is Glutamate-rich protein 6B (ERICH6B) of Homo sapiens (Human).